Here is a 602-residue protein sequence, read N- to C-terminus: Proteasome-associated ATPase (602 aa).

Basic and acidic residues predominate over residues 1–13; the sequence is MQHDLPGGRHDEA. A disordered region spans residues 1-33; that stretch reads MQHDLPGGRHDEADSSETGGAGTTENPSSEQAR. Over residues 23–32 the composition is skewed to polar residues; the sequence is TTENPSSEQA. Positions 28–103 form a coiled coil; it reads SSEQARQIRF…LREEVDRLAQ (76 aa). An ATP-binding site is contributed by 291-296; that stretch reads GCGKTL. The docks into pockets in the proteasome alpha-ring stretch occupies residues 601 to 602; it reads YL.

It belongs to the AAA ATPase family. In terms of assembly, homohexamer. Assembles into a hexameric ring structure that caps the 20S proteasome core. Strongly interacts with the prokaryotic ubiquitin-like protein Pup through a hydrophobic interface; the interacting region of ARC lies in its N-terminal coiled-coil domain. There is one Pup binding site per ARC hexamer ring. Upon ATP-binding, the C-terminus of ARC interacts with the alpha-rings of the proteasome core, possibly by binding to the intersubunit pockets.

The protein operates within protein degradation; proteasomal Pup-dependent pathway. In terms of biological role, ATPase which is responsible for recognizing, binding, unfolding and translocation of pupylated proteins into the bacterial 20S proteasome core particle. May be essential for opening the gate of the 20S proteasome via an interaction with its C-terminus, thereby allowing substrate entry and access to the site of proteolysis. Thus, the C-termini of the proteasomal ATPase may function like a 'key in a lock' to induce gate opening and therefore regulate proteolysis. This is Proteasome-associated ATPase from Saccharomonospora viridis (strain ATCC 15386 / DSM 43017 / JCM 3036 / CCUG 5913 / NBRC 12207 / NCIMB 9602 / P101) (Thermoactinomyces viridis).